The sequence spans 1102 residues: Ubiquitin carboxyl-terminal hydrolase 7 (1102 aa).

Residues 1–10 show a composition bias toward low complexity; sequence MNHQQQQQQQ. Residues 1–38 form a disordered region; that stretch reads MNHQQQQQQQKAGEQQLSEPEDMEMEAGDTDDPPRITQ. The interaction with TSPYL5 stretch occupies residues 1-208; it reads MNHQQQQQQQ…APHGVAWDSK (208 aa). Ser18 carries the post-translational modification Phosphoserine. Residues 19-31 show a composition bias toward acidic residues; that stretch reads EPEDMEMEAGDTD. At Ser49 the chain carries Phosphoserine. The interaction with p53/TP53, MDM2 and EBNA1 stretch occupies residues 53 to 208; it reads NTAEEDMEDD…APHGVAWDSK (156 aa). The MATH domain occupies 68 to 195; it reads EATFQFTVER…DDKVTFEVFV (128 aa). Residues 70-205 form a necessary for nuclear localization region; it reads TFQFTVERFS…QADAPHGVAW (136 aa). In terms of domain architecture, USP spans 214-521; it reads VGLKNQGATC…NAYMLVYIRE (308 aa). Residue Cys223 is the Nucleophile of the active site. His464 serves as the catalytic Proton acceptor. The interval 622-801 is interaction with ICP0/VMW110; the sequence is LWPMQARSNG…HRVDVIFCDK (180 aa). N6-acetyllysine; alternate is present on Lys869. Lys869 is covalently cross-linked (Glycyl lysine isopeptide (Lys-Gly) (interchain with G-Cter in SUMO2); alternate). Lys869 is covalently cross-linked (Glycyl lysine isopeptide (Lys-Gly) (interchain with G-Cter in ubiquitin); alternate). Lys882 participates in a covalent cross-link: Glycyl lysine isopeptide (Lys-Gly) (interchain with G-Cter in SUMO2). A Phosphoserine modification is found at Ser963. 2 positions are modified to N6-acetyllysine: Lys1084 and Lys1096.

Belongs to the peptidase C19 family. Monomer. Homodimer. Part of a complex with DAXX, MDM2, RASSF1 and USP7. Part of a complex with DAXX, MDM2 and USP7. Interacts with MDM2; the interaction is independent of p53/TP53. Interacts with DAXX; the interaction is direct and independent of MDM2 and p53/TP53. Component of a complex composed of KMT2E/MLL5 (isoform 3), OGT (isoform 1) and USP7; the complex stabilizes KMT2E/MLL5, preventing KMT2E/MLL5 ubiquitination and proteasomal-mediated degradation. Interacts (via MATH domain) with KMT2E/MLL5 isoform 3. Interacts with OGT isoform 1. Interacts with FOXO4; the interaction is enhanced in presence of hydrogen peroxide and occurs independently of p53/TP53. Interacts with p53/TP53; the interaction is enhanced in response to DNA damage. Interacts with TSPYL5; this impairs interaction with p53/TP53. Interacts with PTEN; the interaction is direct. Interacts with ATXN1 and the strength of interaction is influenced by the length of the poly-Gln region in ATXN1. A weaker interaction seen with mutants having longer poly-Gln regions. Interacts with KIAA1530/UVSSA. Interacts with ABRAXAS2; the interaction is direct. Identified in a complex with TP53/p53 and ABRAXAS2. Interacts with MEX3C and antagonizes its ability to degrade mRNA. Interacts with DNMT1 and UHRF1. Interacts with FOXP3. Interacts (via MATH domain) with RNF220. Associated component of the Polycomb group (PcG) multiprotein PRC1-like complex. Interacts with EPOP. Interacts with OTUD4 and USP9X; the interaction is direct. Interacts with CRY2. Interacts with REST. Interacts with ERCC6. Part of a complex consisting of USP7, MAGEL2 and TRIM27; directly interacts with MAGEL2; directly interacts with TRIM27. As to quaternary structure, (Microbial infection) Isoform 1 and isoform 2 interact with herpesvirus 1 trans-acting transcriptional protein ICP0/VMW110. Binding to ICP0/VMW110 may modulate the substrate specificity or activity of USP7 to stabilize viral proteins. In terms of assembly, (Microbial infection) Interacts with Epstein-Barr virus EBNA1; the interaction is independent and simultaneous to EBNA1 interaction with USP7 as well as necessary for PML nuclear bodies disruption by EBNA1. EBNA1, USP7 and CSNK2B form a ternary complex. EBNA1 shows a 10-fold higher affinity than p53/TP53 and can compete with it for USP7 binding. (Microbial infection) Interacts with human cytomegalovirus proteins UL35 and UL35A; these interactions inhibit the ability of USP7 to form nuclear bodies. As to quaternary structure, (Microbial infection) Interacts with herpes virus 8/HHV-8 proteins vIRF-1 and vIRF-3; these interactions may disrupt TP53 signaling pathway during viral infection by decreasing the availability of USP7 for deubiquitinating and stabilizing TP53. In terms of assembly, (Microbial infection) Interacts with herpes virus 8/HHV-8 protein vIRF-2; this interaction modulates antiviral signaling via disruption of USP7 interactions with innate immune signaling proteins TRAF3 and TRAF6 thus affecting their ubiquitination. In terms of processing, isoform 1: Phosphorylated. Isoform 1 is phosphorylated at positions Ser-18 and Ser-963. Isoform 2: Not phosphorylated. Isoform 1: Polyneddylated. Isoform 2: Not Polyneddylated. Post-translationally, isoform 1 and isoform 2: Not sumoylated. In terms of processing, isoform 1 and isoform 2: Polyubiquitinated by herpesvirus 1 trans-acting transcriptional protein ICP0/VMW110; leading to its subsequent proteasomal degradation. Isoform 1: Ubiquitinated at Lys-869. Expressed in neural progenitor cells (at protein level). Widely expressed. Overexpressed in prostate cancer.

The protein resides in the nucleus. It localises to the cytoplasm. It is found in the PML body. The protein localises to the chromosome. It catalyses the reaction Thiol-dependent hydrolysis of ester, thioester, amide, peptide and isopeptide bonds formed by the C-terminal Gly of ubiquitin (a 76-residue protein attached to proteins as an intracellular targeting signal).. With respect to regulation, inhibited by N-ethyl-maleimide (NEM) and divalent cations. Tolerates high concentrations of NaCl but is inhibited at concentrations of 195 mM and higher. Hydrolase that deubiquitinates target proteins such as ARMC5, FOXO4, DEPTOR, KAT5, p53/TP53, MDM2, ERCC6, DNMT1, UHRF1, PTEN, KMT2E/MLL5 and DAXX. Together with DAXX, prevents MDM2 self-ubiquitination and enhances the E3 ligase activity of MDM2 towards p53/TP53, thereby promoting p53/TP53 ubiquitination and proteasomal degradation. Deubiquitinates p53/TP53, preventing degradation of p53/TP53, and enhances p53/TP53-dependent transcription regulation, cell growth repression and apoptosis. Deubiquitinates p53/TP53 and MDM2 and strongly stabilizes p53/TP53 even in the presence of excess MDM2, and also induces p53/TP53-dependent cell growth repression and apoptosis. Deubiquitination of FOXO4 in presence of hydrogen peroxide is not dependent on p53/TP53 and inhibits FOXO4-induced transcriptional activity. In association with DAXX, is involved in the deubiquitination and translocation of PTEN from the nucleus to the cytoplasm, both processes that are counteracted by PML. Deubiquitinates KMT2E/MLL5 preventing KMT2E/MLL5 proteasomal-mediated degradation. Involved in cell proliferation during early embryonic development. Involved in transcription-coupled nucleotide excision repair (TC-NER) in response to UV damage: recruited to DNA damage sites following interaction with KIAA1530/UVSSA and promotes deubiquitination of ERCC6, preventing UV-induced degradation of ERCC6. Involved in maintenance of DNA methylation via its interaction with UHRF1 and DNMT1: acts by mediating deubiquitination of UHRF1 and DNMT1, preventing their degradation and promoting DNA methylation by DNMT1. Deubiquitinates alkylation repair enzyme ALKBH3. OTUD4 recruits USP7 and USP9X to stabilize ALKBH3, thereby promoting the repair of alkylated DNA lesions. Acts as a chromatin regulator via its association with the Polycomb group (PcG) multiprotein PRC1-like complex; may act by deubiquitinating components of the PRC1-like complex. Able to mediate deubiquitination of histone H2B; it is however unsure whether this activity takes place in vivo. Exhibits a preference towards 'Lys-48'-linked ubiquitin chains. Increases regulatory T-cells (Treg) suppressive capacity by deubiquitinating and stabilizing the transcription factor FOXP3 which is crucial for Treg cell function. Plays a role in the maintenance of the circadian clock periodicity via deubiquitination and stabilization of the CRY1 and CRY2 proteins. Deubiquitinates REST, thereby stabilizing REST and promoting the maintenance of neural progenitor cells. Deubiquitinates SIRT7, inhibiting SIRT7 histone deacetylase activity and regulating gluconeogenesis. Involved in the regulation of WASH-dependent actin polymerization at the surface of endosomes and the regulation of endosomal protein recycling. It maintains optimal WASH complex activity and precise F-actin levels via deubiquitination of TRIM27 and WASHC1. Mediates the deubiquitination of phosphorylated DEPTOR, promoting its stability and leading to decreased mTORC1 signaling. Functionally, (Microbial infection) Contributes to the overall stabilization and trans-activation capability of the herpesvirus 1 trans-acting transcriptional protein ICP0/VMW110 during HSV-1 infection. Its function is as follows. (Microbial infection) Upon infection with Epstein-Barr virus, the interaction with viral EBNA1 increases the association of USP7 with PML proteins, which is required for the polyubiquitylation and degradation of PML. The polypeptide is Ubiquitin carboxyl-terminal hydrolase 7 (Homo sapiens (Human)).